Here is a 557-residue protein sequence, read N- to C-terminus: uncharacterized protein (557 aa).

An N-terminal signal peptide occupies residues 1 to 30 (MAPRRRRHTRIAGLRVVGTATLVAATTLTA). Residue Cys-31 is the site of N-palmitoyl cysteine attachment. A lipid anchor (S-diacylglycerol cysteine) is attached at Cys-31.

To M.bovis Mb2616c and M.leprae ML0489.

It is found in the cell membrane. This is an uncharacterized protein from Mycobacterium tuberculosis (strain ATCC 25618 / H37Rv).